The sequence spans 413 residues: Putative zinc finger protein B0310.2 (413 aa).

2 disordered regions span residues 130-151 and 259-290; these read PIFS…KRSL and VESD…TGPM. The segment covering 270–281 has biased composition (polar residues); sequence PSPSTGDITENE. C2H2-type zinc fingers lie at residues 306 to 330 and 336 to 358; these read FICM…MFIH and HTCP…KKTH.

It is found in the nucleus. This chain is Putative zinc finger protein B0310.2, found in Caenorhabditis elegans.